Here is a 591-residue protein sequence, read N- to C-terminus: Oligopeptide-binding protein OppA (591 aa).

It belongs to the bacterial solute-binding protein 5 family. As to quaternary structure, the complex is composed of an ATP-binding protein (OppD), two transmembrane proteins (OppB and OppC) and a solute-binding protein (OppA).

It localises to the periplasm. Functionally, part of the ABC transporter complex OppABCD involved in the uptake of oligopeptides. Peptide-binding protein that shows broad specificity but a moderate preference for hydrophobic oligopeptides and those that are 6-16 amino acids long. The polypeptide is Oligopeptide-binding protein OppA (Mycobacterium bovis (strain ATCC BAA-935 / AF2122/97)).